Reading from the N-terminus, the 436-residue chain is 3-phosphoshikimate 1-carboxyvinyltransferase (436 aa).

Lys-23, Ser-24, and Arg-28 together coordinate 3-phosphoshikimate. Residue Lys-23 coordinates phosphoenolpyruvate. Residues Gly-97 and Arg-126 each contribute to the phosphoenolpyruvate site. 3-phosphoshikimate contacts are provided by Ser-171, Gln-173, Asp-323, and Lys-350. Gln-173 contacts phosphoenolpyruvate. The active-site Proton acceptor is the Asp-323. 2 residues coordinate phosphoenolpyruvate: Arg-354 and Arg-396.

This sequence belongs to the EPSP synthase family. Monomer.

The protein resides in the cytoplasm. The enzyme catalyses 3-phosphoshikimate + phosphoenolpyruvate = 5-O-(1-carboxyvinyl)-3-phosphoshikimate + phosphate. It functions in the pathway metabolic intermediate biosynthesis; chorismate biosynthesis; chorismate from D-erythrose 4-phosphate and phosphoenolpyruvate: step 6/7. Catalyzes the transfer of the enolpyruvyl moiety of phosphoenolpyruvate (PEP) to the 5-hydroxyl of shikimate-3-phosphate (S3P) to produce enolpyruvyl shikimate-3-phosphate and inorganic phosphate. This chain is 3-phosphoshikimate 1-carboxyvinyltransferase, found in Prochlorococcus marinus (strain AS9601).